The primary structure comprises 308 residues: Aspartate carbamoyltransferase catalytic subunit (308 aa).

2 residues coordinate carbamoyl phosphate: Arg-55 and Thr-56. Lys-84 is an L-aspartate binding site. Carbamoyl phosphate is bound by residues Arg-105, His-133, and Gln-136. Positions 167 and 228 each coordinate L-aspartate. Carbamoyl phosphate-binding residues include Leu-267 and Pro-268.

This sequence belongs to the aspartate/ornithine carbamoyltransferase superfamily. ATCase family. In terms of assembly, heterooligomer of catalytic and regulatory chains.

The catalysed reaction is carbamoyl phosphate + L-aspartate = N-carbamoyl-L-aspartate + phosphate + H(+). It functions in the pathway pyrimidine metabolism; UMP biosynthesis via de novo pathway; (S)-dihydroorotate from bicarbonate: step 2/3. Functionally, catalyzes the condensation of carbamoyl phosphate and aspartate to form carbamoyl aspartate and inorganic phosphate, the committed step in the de novo pyrimidine nucleotide biosynthesis pathway. The sequence is that of Aspartate carbamoyltransferase catalytic subunit from Methanocella arvoryzae (strain DSM 22066 / NBRC 105507 / MRE50).